We begin with the raw amino-acid sequence, 186 residues long: UPF0301 protein LHK_02881 (186 aa).

The protein belongs to the UPF0301 (AlgH) family.

This is UPF0301 protein LHK_02881 from Laribacter hongkongensis (strain HLHK9).